Here is a 292-residue protein sequence, read N- to C-terminus: Zinc finger protein OZF (292 aa).

10 consecutive C2H2-type zinc fingers follow at residues 16–38, 44–66, 72–94, 100–122, 128–150, 156–178, 184–206, 212–234, 240–262, and 268–290; these read FACK…EHFH, FECN…QSTH, FECS…QKIH, FECK…QRTH, FICK…EKIH, FKCN…QNIH, YECN…VRIH, YECN…VRSH, YGCN…LRIH, and YQCS…QKIH. Residues lysine 28, lysine 51, and lysine 56 each participate in a glycyl lysine isopeptide (Lys-Gly) (interchain with G-Cter in SUMO2) cross-link. Glycyl lysine isopeptide (Lys-Gly) (interchain with G-Cter in SUMO) cross-links involve residues lysine 157 and lysine 169. Lysine 173 participates in a covalent cross-link: Glycyl lysine isopeptide (Lys-Gly) (interchain with G-Cter in SUMO2). An interaction with TERF2IP region spans residues 212–292; sequence YECNVCGKAF…HIRHQKIHTH (81 aa).

Belongs to the krueppel C2H2-type zinc-finger protein family. Binds DNA. Interacts with SUMO conjugating enzyme UBC9/UBE2I. Interacts with the telomeric protein TERF2IP. Expressed in heart, brain, liver, lung, skeletal muscle and kidney, and at much lower level in spleen and testicle. Expressed in lactating mammary gland.

It localises to the nucleus. The sequence is that of Zinc finger protein OZF (Znf146) from Mus musculus (Mouse).